Consider the following 222-residue polypeptide: Probable transaldolase (222 aa).

K91 functions as the Schiff-base intermediate with substrate in the catalytic mechanism.

This sequence belongs to the transaldolase family. Type 3B subfamily.

The protein localises to the cytoplasm. It catalyses the reaction D-sedoheptulose 7-phosphate + D-glyceraldehyde 3-phosphate = D-erythrose 4-phosphate + beta-D-fructose 6-phosphate. The protein operates within carbohydrate degradation; pentose phosphate pathway; D-glyceraldehyde 3-phosphate and beta-D-fructose 6-phosphate from D-ribose 5-phosphate and D-xylulose 5-phosphate (non-oxidative stage): step 2/3. Its function is as follows. Transaldolase is important for the balance of metabolites in the pentose-phosphate pathway. In Chlorobium luteolum (strain DSM 273 / BCRC 81028 / 2530) (Pelodictyon luteolum), this protein is Probable transaldolase.